Here is a 59-residue protein sequence, read N- to C-terminus: Cuticle protein 16 isoform D (59 aa).

This Limulus polyphemus (Atlantic horseshoe crab) protein is Cuticle protein 16 isoform D.